The sequence spans 163 residues: Cytochrome b6-f complex subunit 4 (163 aa).

Transmembrane regions (helical) follow at residues 36–56, 95–115, and 131–151; these read LLYIFPVVILGTIACNVGLAV, LLGVLLMVSVPLGLLTVPFLE, and TVFLIGTAVALWLGIGATLPI.

The protein belongs to the cytochrome b family. PetD subfamily. In terms of assembly, the 4 large subunits of the cytochrome b6-f complex are cytochrome b6, subunit IV (17 kDa polypeptide, petD), cytochrome f and the Rieske protein, while the 4 small subunits are petG, petL, petM and petN. The complex functions as a dimer.

It localises to the plastid. Its subcellular location is the chloroplast thylakoid membrane. Functionally, component of the cytochrome b6-f complex, which mediates electron transfer between photosystem II (PSII) and photosystem I (PSI), cyclic electron flow around PSI, and state transitions. In Phalaenopsis aphrodite subsp. formosana (Moth orchid), this protein is Cytochrome b6-f complex subunit 4.